We begin with the raw amino-acid sequence, 459 residues long: Type I restriction enzyme HindI specificity subunit (459 aa).

Belongs to the type-I restriction system S methylase family. The type I restriction/modification system is composed of three polypeptides R, M and S; the restriction enzyme has stoichiometry R(2)M(2)S(1) while the methyltransferase is M(2)S(1).

The specificity (S) subunit of a type I restriction enzyme; this subunit dictates DNA sequence specificity. The M and S subunits together form a methyltransferase (MTase) that methylates adenosines in the sequence 5'-RAACN(5)TAG-3'. Methylation protects against cleavage by HindI. In the presence of the R subunit the complex can also act as an endonuclease, binding to the same target sequence but cutting the DNA some distance from this site. Whether the DNA is cut or modified depends on the methylation state of the target sequence. When the target site is unmodified, the DNA is cut. When the target site is hemimethylated, the complex acts as a maintenance MTase modifying the DNA so that both strands become methylated. After locating a non-methylated recognition site, the enzyme complex serves as a molecular motor that translocates DNA in an ATP-dependent manner until a collision occurs that triggers cleavage. This is Type I restriction enzyme HindI specificity subunit from Haemophilus influenzae (strain ATCC 51907 / DSM 11121 / KW20 / Rd).